A 299-amino-acid chain; its full sequence is GTP cyclohydrolase FolE2 (299 aa).

Residues 1 to 25 (MKTKQWPSKTERHKRFGSVPPVAGK) form a disordered region.

Belongs to the GTP cyclohydrolase IV family.

The enzyme catalyses GTP + H2O = 7,8-dihydroneopterin 3'-triphosphate + formate + H(+). It participates in cofactor biosynthesis; 7,8-dihydroneopterin triphosphate biosynthesis; 7,8-dihydroneopterin triphosphate from GTP: step 1/1. In terms of biological role, converts GTP to 7,8-dihydroneopterin triphosphate. In Halalkalibacterium halodurans (strain ATCC BAA-125 / DSM 18197 / FERM 7344 / JCM 9153 / C-125) (Bacillus halodurans), this protein is GTP cyclohydrolase FolE2.